Consider the following 266-residue polypeptide: Phosphatidylglycerol--prolipoprotein diacylglyceryl transferase (266 aa).

Helical transmembrane passes span F14–W34, F55–Y75, W91–F111, and V117–G137. R138 contacts a 1,2-diacyl-sn-glycero-3-phospho-(1'-sn-glycerol). Helical transmembrane passes span Y172–F192, G201–F221, and W235–V255.

The protein belongs to the Lgt family.

The protein resides in the cell inner membrane. It catalyses the reaction L-cysteinyl-[prolipoprotein] + a 1,2-diacyl-sn-glycero-3-phospho-(1'-sn-glycerol) = an S-1,2-diacyl-sn-glyceryl-L-cysteinyl-[prolipoprotein] + sn-glycerol 1-phosphate + H(+). It participates in protein modification; lipoprotein biosynthesis (diacylglyceryl transfer). Its function is as follows. Catalyzes the transfer of the diacylglyceryl group from phosphatidylglycerol to the sulfhydryl group of the N-terminal cysteine of a prolipoprotein, the first step in the formation of mature lipoproteins. The chain is Phosphatidylglycerol--prolipoprotein diacylglyceryl transferase from Hydrogenovibrio crunogenus (strain DSM 25203 / XCL-2) (Thiomicrospira crunogena).